A 233-amino-acid polypeptide reads, in one-letter code: Octanoyltransferase (233 aa).

The 176-residue stretch at 36–211 (DTTPDEIWLV…EFTRQLGYPT (176 aa)) folds into the BPL/LPL catalytic domain. Residues 75–82 (RGGQVTYH), 142–144 (SLG), and 155–157 (GLA) contribute to the substrate site. Cys-173 acts as the Acyl-thioester intermediate in catalysis.

The protein belongs to the LipB family.

Its subcellular location is the cytoplasm. The catalysed reaction is octanoyl-[ACP] + L-lysyl-[protein] = N(6)-octanoyl-L-lysyl-[protein] + holo-[ACP] + H(+). It participates in protein modification; protein lipoylation via endogenous pathway; protein N(6)-(lipoyl)lysine from octanoyl-[acyl-carrier-protein]: step 1/2. Its function is as follows. Catalyzes the transfer of endogenously produced octanoic acid from octanoyl-acyl-carrier-protein onto the lipoyl domains of lipoate-dependent enzymes. Lipoyl-ACP can also act as a substrate although octanoyl-ACP is likely to be the physiological substrate. The chain is Octanoyltransferase from Yersinia pestis bv. Antiqua (strain Antiqua).